A 718-amino-acid polypeptide reads, in one-letter code: Protein SQS1 (718 aa).

Disordered regions lie at residues 247–301 (TTAI…DEDD), 341–404 (FALN…GLAR), and 430–452 (KRGA…SANA). Over residues 265–282 (TSLRDDPEVIPVAREKRA) the composition is skewed to basic and acidic residues. The segment covering 283-293 (GRQRSRSKASK) has biased composition (basic residues). A compositionally biased stretch (acidic residues) spans 375-400 (DADEDNGDENDEADEDDDMDADMDDE). Residues 442–452 (TPSSFAKSANA) show a composition bias toward polar residues. In terms of domain architecture, R3H spans 537 to 599 (GLRLEDFKTE…TRRPVLYRSK (63 aa)). The G-patch domain occupies 673 to 718 (QENKGRAMLEKMGWSKGMALGALENKGILEPVAQVVKKSKAGLGRT).

It belongs to the SQS1 family.

It localises to the cytoplasm. The protein resides in the nucleus. May be involved in splicing. The polypeptide is Protein SQS1 (SQS1) (Podospora anserina (Pleurage anserina)).